We begin with the raw amino-acid sequence, 345 residues long: Cytoskeleton protein RodZ (345 aa).

The Cytoplasmic segment spans residues 1 to 111 (MNTEASQDQT…LGKKHKKRDG (111 aa)). The HTH cro/C1-type domain occupies 19 to 79 (LRQARESLGL…KLVHLPEDEL (61 aa)). A DNA-binding region (H-T-H motif) is located at residues 30 to 49 (QQTVAERLCLKVSTIRDIEE). The chain crosses the membrane as a helical; Signal-anchor for type II membrane protein span at residues 112-132 (WLMSFTWLIVLVVLGLTGAWW). At 133-345 (WQNHQAQQAE…RVARLTVGVE (213 aa)) the chain is on the periplasmic side. The tract at residues 151–260 (SAQLSQNGGQ…LPTADAGVSG (110 aa)) is disordered. Residues 188 to 225 (PLTNHSGSAITNSATTSSVPKTTSTEPVDTANTNTTMH) are compositionally biased toward polar residues. Over residues 229–241 (AASAAVSPSQVPQ) the composition is skewed to low complexity.

This sequence belongs to the RodZ family.

Its subcellular location is the cell inner membrane. In terms of biological role, cytoskeletal protein that is involved in cell-shape control through regulation of the length of the long axis. The polypeptide is Cytoskeleton protein RodZ (Yersinia pestis (strain Pestoides F)).